The sequence spans 366 residues: Chorismate synthase (366 aa).

Arg-46 provides a ligand contact to NADP(+). Residues 122-124 (RSS), 243-244 (NG), Gly-284, 299-303 (KPTPS), and Arg-325 contribute to the FMN site.

It belongs to the chorismate synthase family. As to quaternary structure, homotetramer. FMNH2 is required as a cofactor.

The catalysed reaction is 5-O-(1-carboxyvinyl)-3-phosphoshikimate = chorismate + phosphate. The protein operates within metabolic intermediate biosynthesis; chorismate biosynthesis; chorismate from D-erythrose 4-phosphate and phosphoenolpyruvate: step 7/7. Catalyzes the anti-1,4-elimination of the C-3 phosphate and the C-6 proR hydrogen from 5-enolpyruvylshikimate-3-phosphate (EPSP) to yield chorismate, which is the branch point compound that serves as the starting substrate for the three terminal pathways of aromatic amino acid biosynthesis. This reaction introduces a second double bond into the aromatic ring system. This Campylobacter hominis (strain ATCC BAA-381 / DSM 21671 / CCUG 45161 / LMG 19568 / NCTC 13146 / CH001A) protein is Chorismate synthase.